Consider the following 245-residue polypeptide: 1-(5-phosphoribosyl)-5-[(5-phosphoribosylamino)methylideneamino] imidazole-4-carboxamide isomerase (245 aa).

Aspartate 7 (proton acceptor) is an active-site residue. Aspartate 129 (proton donor) is an active-site residue.

This sequence belongs to the HisA/HisF family.

It localises to the cytoplasm. The catalysed reaction is 1-(5-phospho-beta-D-ribosyl)-5-[(5-phospho-beta-D-ribosylamino)methylideneamino]imidazole-4-carboxamide = 5-[(5-phospho-1-deoxy-D-ribulos-1-ylimino)methylamino]-1-(5-phospho-beta-D-ribosyl)imidazole-4-carboxamide. It functions in the pathway amino-acid biosynthesis; L-histidine biosynthesis; L-histidine from 5-phospho-alpha-D-ribose 1-diphosphate: step 4/9. This is 1-(5-phosphoribosyl)-5-[(5-phosphoribosylamino)methylideneamino] imidazole-4-carboxamide isomerase from Proteus mirabilis (strain HI4320).